The primary structure comprises 409 residues: MSAETKKTDVKKVVLAYSGGLDTSAIIPWLKETYDNCEIVAFCADVGQGSEELEGLHEKAIASGASECYIVDLKEELVADYIYPTIATGAIYEGTYLLGTSMARPIIAKAQVEVARKVGADAVCHGCTGKGNDQVRFEGCFAALAPDLKVIAPWREWEMVSREDLLDYLAERNIETTASATKIYSRDANAWHISHEGGELEDPWNEPTQGVWTMTVAPEDAPNTPEYVALELEQGKITKVNGEALSPYKALMLLNDLAGAHGVGRIDITENRLVGMKSRGCYETPGGTVMFAALRAIEELVLDKTSREWREQVGAQMAHLVYDGRWFTPLCESLLGASKPLADLVNGEVVIKLYKGQASAVKKRSPNSLYSEEFATFGEDDVYNQKDAEGFIRLYSLSSRIRALHGHNK.

ATP contacts are provided by residues 16–24 (AYSGGLDTS) and A44. Residues Y96 and S101 each coordinate L-citrulline. G126 serves as a coordination point for ATP. L-aspartate contacts are provided by T128, N132, and D133. N132 is an L-citrulline binding site. 5 residues coordinate L-citrulline: R136, S185, S194, E270, and Y282.

The protein belongs to the argininosuccinate synthase family. Type 1 subfamily. In terms of assembly, homotetramer.

Its subcellular location is the cytoplasm. The enzyme catalyses L-citrulline + L-aspartate + ATP = 2-(N(omega)-L-arginino)succinate + AMP + diphosphate + H(+). The protein operates within amino-acid biosynthesis; L-arginine biosynthesis; L-arginine from L-ornithine and carbamoyl phosphate: step 2/3. This Shewanella piezotolerans (strain WP3 / JCM 13877) protein is Argininosuccinate synthase.